The following is a 486-amino-acid chain: Intermediate cleaving peptidase 55 (486 aa).

The N-terminal 19 residues, 1 to 19 (MSGYIRTLFIRNRFSNYRL), are a transit peptide targeting the mitochondrion. The Mn(2+) site is built by aspartate 317, aspartate 328, histidine 407, glutamate 434, and glutamate 457.

It belongs to the peptidase M24B family. Requires Mn(2+) as cofactor.

The protein resides in the mitochondrion inner membrane. It carries out the reaction The enzyme cleaves the 36-Pro-Pro-37 bond of cysteine desulfurase (EC 2.8.1.7) removing three amino acid residues (Tyr-Ser-Pro) from the N-terminus after cleavage by mitochondrial processing peptidase.. In terms of biological role, aminopeptidase which cleaves preprotein intermediates that carry destabilizing N-ter amino acid residues after the mitochondrial processing peptidase (MPP) cleavage site and is thus critical for stabilization of the mitochondrial proteome. This is Intermediate cleaving peptidase 55 (icp55) from Schizosaccharomyces pombe (strain 972 / ATCC 24843) (Fission yeast).